Consider the following 322-residue polypeptide: MSDSLTELLLEIGKALIVLVGIVGAGAFMSFIERRLLALWQDRHGPNRVGPFGLFQLLADMIKMFFKEDWIPPFADRRIFILAPIIAFTAFILAFAVVPITPTWGVADLNVGLLYILAIAGLAVYAVLFAGWSSNNKYSLLGSLRASAQTLSYEVFLGLSLMGIVIQTGSFNLRDIVEAQAGLWNVVPQFLGFITFLFAGVAVTHRHPFDQPEAEQELADGYHIEYAGMKWGLFFVGEYIGIVLISSLIVTLFFGGWHGPWLPPFFWFALKTACFMVFFILLRASLPRPRFDQVMSFGWKVCLPLTLINMLITAAVVLMNVQ.

Transmembrane regions (helical) follow at residues 12–32 (IGKA…MSFI), 79–99 (IFIL…AVVP), 111–131 (VGLL…LFAG), 151–171 (LSYE…TGSF), 183–203 (LWNV…GVAV), 234–254 (FFVG…TLFF), 262–282 (LPPF…FILL), and 301–321 (VCLP…LMNV).

The protein belongs to the complex I subunit 1 family. In terms of assembly, NDH-1 is composed of 13 different subunits. Subunits NuoA, H, J, K, L, M, N constitute the membrane sector of the complex.

Its subcellular location is the cell inner membrane. The catalysed reaction is a quinone + NADH + 5 H(+)(in) = a quinol + NAD(+) + 4 H(+)(out). Its function is as follows. NDH-1 shuttles electrons from NADH, via FMN and iron-sulfur (Fe-S) centers, to quinones in the respiratory chain. The immediate electron acceptor for the enzyme in this species is believed to be ubiquinone. Couples the redox reaction to proton translocation (for every two electrons transferred, four hydrogen ions are translocated across the cytoplasmic membrane), and thus conserves the redox energy in a proton gradient. This subunit may bind ubiquinone. The sequence is that of NADH-quinone oxidoreductase subunit H from Shewanella oneidensis (strain ATCC 700550 / JCM 31522 / CIP 106686 / LMG 19005 / NCIMB 14063 / MR-1).